Consider the following 184-residue polypeptide: Probable chorismate pyruvate-lyase 1 (184 aa).

Substrate contacts are provided by Arg70, Leu108, and Glu166.

It belongs to the UbiC family.

It localises to the cytoplasm. It catalyses the reaction chorismate = 4-hydroxybenzoate + pyruvate. It functions in the pathway cofactor biosynthesis; ubiquinone biosynthesis. Its function is as follows. Removes the pyruvyl group from chorismate, with concomitant aromatization of the ring, to provide 4-hydroxybenzoate (4HB) for the ubiquinone pathway. This is Probable chorismate pyruvate-lyase 1 from Burkholderia pseudomallei (strain 1710b).